Consider the following 22-residue polypeptide: Rothein 4.1 (22 aa).

It belongs to the frog skin active peptide (FSAP) family. Rothein subfamily. As to expression, expressed by the skin dorsal glands.

The protein localises to the secreted. Its function is as follows. Lacks antimicrobial activity. Does not inhibit the formation of NO by neuronal nitric oxide. The polypeptide is Rothein 4.1 (Litoria rothii (Roth's tree frog)).